The sequence spans 445 residues: D-serine dehydratase (445 aa).

At lysine 118 the chain carries N6-(pyridoxal phosphate)lysine.

It belongs to the serine/threonine dehydratase family. DsdA subfamily. In terms of assembly, monomer. Requires pyridoxal 5'-phosphate as cofactor.

It catalyses the reaction D-serine = pyruvate + NH4(+). This Serratia proteamaculans (strain 568) protein is D-serine dehydratase.